A 379-amino-acid polypeptide reads, in one-letter code: UDP-4-amino-4-deoxy-L-arabinose--oxoglutarate aminotransferase (379 aa).

Lys183 is modified (N6-(pyridoxal phosphate)lysine).

This sequence belongs to the DegT/DnrJ/EryC1 family. ArnB subfamily. As to quaternary structure, homodimer. It depends on pyridoxal 5'-phosphate as a cofactor.

It carries out the reaction UDP-4-amino-4-deoxy-beta-L-arabinose + 2-oxoglutarate = UDP-beta-L-threo-pentopyranos-4-ulose + L-glutamate. Its pathway is nucleotide-sugar biosynthesis; UDP-4-deoxy-4-formamido-beta-L-arabinose biosynthesis; UDP-4-deoxy-4-formamido-beta-L-arabinose from UDP-alpha-D-glucuronate: step 2/3. The protein operates within bacterial outer membrane biogenesis; lipopolysaccharide biosynthesis. Functionally, catalyzes the conversion of UDP-4-keto-arabinose (UDP-Ara4O) to UDP-4-amino-4-deoxy-L-arabinose (UDP-L-Ara4N). The modified arabinose is attached to lipid A and is required for resistance to polymyxin and cationic antimicrobial peptides. This is UDP-4-amino-4-deoxy-L-arabinose--oxoglutarate aminotransferase from Pseudomonas fluorescens (strain ATCC BAA-477 / NRRL B-23932 / Pf-5).